The chain runs to 393 residues: Cytotoxic and regulatory T-cell molecule (393 aa).

A signal peptide spans 1-16 (MWWGALSLLFWVPVQA). The region spanning 17 to 111 (AFLKMETVTV…SVKTKQVRVT (95 aa)) is the Ig-like V-type domain. At 17–289 (AFLKMETVTV…HTGLARRKSG (273 aa)) the chain is on the extracellular side. 2 disulfides stabilise this stretch: Cys36–Cys96 and Cys139–Cys194. N-linked (GlcNAc...) asparagine glycosylation is found at Asn85 and Asn176. An Ig-like C2-type domain is found at 119–208 (PTVEALVLRR…EGLHGRKLVA (90 aa)). A compositionally biased stretch (acidic residues) spans 218–228 (DQETSDQETSD). The segment at 218 to 280 (DQETSDQETS…GLSTEASAQH (63 aa)) is disordered. Positions 229-246 (APEQSSLSSQALQQPTST) are enriched in low complexity. The segment covering 247-256 (VSMMENSSIP) has biased composition (polar residues). Basic and acidic residues predominate over residues 257–267 (ETDKEEKEHAT). Residues 270–280 (PGLSTEASAQH) are compositionally biased toward polar residues. A helical transmembrane segment spans residues 290-310 (ILLLTLVSFLIFILFIIVQLF). Topologically, residues 311–393 (IMKLRKAHVV…KHSRVPESIV (83 aa)) are cytoplasmic. Residues 333 to 356 (ESYRSRSNNEETSSQENSSQAPQS) form a disordered region. Over residues 342-352 (EETSSQENSSQ) the composition is skewed to low complexity. Residues 390–393 (ESIV) carry the PDZ-binding motif.

It belongs to the nectin family. Monomer. May form homodimer (via Ig-like V-type domain). Interacts (via Ig-like V-type domain) with CADM1 (via Ig-like V-type domain); the interaction competes with CRTAM homodimerization and CADM1 homodimerization. Interacts (via PDZ-binding motif) with SCRIB (via PDZ domain 3); the interaction promotes CRTAM and SCRIB polarization in a subset of CD4+ T-cells. In the immune system, expression is restricted to activated class-I MHC-restricted cells, including NKT, NK and CD8+ T-cells (at protein level). Transiently expressed in activated CD8+ T-cells and a subset of activated CD4+ T-cells (at protein level). Expressed in activated intestinal T-cells, specifically intraepithelial CD4+ CD8+ T-cells, intraepithelial CD4+ T-cells and, CD8+ T-cells in the intestine epithelium, lamina propria, Peyer's Patches and mesenteric lymph nodes. Also expressed in spleen, brain and testis.

The protein resides in the cell membrane. Its function is as follows. Mediates heterophilic cell-cell adhesion which regulates the activation, differentiation and tissue retention of various T-cell subsets. Interaction with CADM1 promotes natural killer (NK) cell cytotoxicity and IFNG/interferon-gamma secretion by CD8+ T-cells in vitro as well as NK cell-mediated rejection of tumors expressing CADM1 in vivo. Regulates CD8+ T-cell proliferation in response to T-cell receptor (TCR) activation. Appears to be dispensable for CD8+ T-cell-mediated cytotoxicity. Interaction with SCRIB promotes the late phase of cellular polarization of a subset of CD4+ T-cells, which in turn regulates TCR-mediated proliferation and IFNG, IL17 and IL22 production. By interacting with CADM1 on CD8+ dendritic cells, regulates the retention of activated CD8+ T-cells within the draining lymph node. Required for the intestinal retention of intraepithelial CD4+ CD8+ T-cells and, to a lesser extent, intraepithelial and lamina propria CD8+ T-cells and CD4+ T-cells. Interaction with CADM1 promotes the adhesion to gut-associated CD103+ dendritic cells, which may facilitate the expression of gut-homing and adhesion molecules on T-cells and the conversion of CD4+ T-cells into CD4+ CD8+ T-cells. The sequence is that of Cytotoxic and regulatory T-cell molecule from Mus musculus (Mouse).